The sequence spans 100 residues: NADH-quinone oxidoreductase subunit K (100 aa).

3 helical membrane passes run 4 to 24 (LQHG…GLVI), 28 to 48 (LLFM…AFVV), and 60 to 80 (VMYI…LALL).

The protein belongs to the complex I subunit 4L family. As to quaternary structure, NDH-1 is composed of 13 different subunits. Subunits NuoA, H, J, K, L, M, N constitute the membrane sector of the complex.

It localises to the cell inner membrane. The catalysed reaction is a quinone + NADH + 5 H(+)(in) = a quinol + NAD(+) + 4 H(+)(out). Its function is as follows. NDH-1 shuttles electrons from NADH, via FMN and iron-sulfur (Fe-S) centers, to quinones in the respiratory chain. The immediate electron acceptor for the enzyme in this species is believed to be ubiquinone. Couples the redox reaction to proton translocation (for every two electrons transferred, four hydrogen ions are translocated across the cytoplasmic membrane), and thus conserves the redox energy in a proton gradient. The chain is NADH-quinone oxidoreductase subunit K from Shigella sonnei (strain Ss046).